Reading from the N-terminus, the 93-residue chain is Small ribosomal subunit protein uS15 (93 aa).

It belongs to the universal ribosomal protein uS15 family. As to quaternary structure, part of the 30S ribosomal subunit. Forms a bridge to the 50S subunit in the 70S ribosome, contacting the 23S rRNA.

Functionally, one of the primary rRNA binding proteins, it binds directly to 16S rRNA where it helps nucleate assembly of the platform of the 30S subunit by binding and bridging several RNA helices of the 16S rRNA. Forms an intersubunit bridge (bridge B4) with the 23S rRNA of the 50S subunit in the ribosome. This is Small ribosomal subunit protein uS15 from Anaplasma phagocytophilum (strain HZ).